The primary structure comprises 748 residues: 5-methyltetrahydropteroyltriglutamate--homocysteine methyltransferase (748 aa).

5-methyltetrahydropteroyltri-L-glutamate contacts are provided by residues 18–21 (REWK) and Lys112. L-homocysteine contacts are provided by residues 420 to 422 (IGS) and Glu473. L-methionine is bound by residues 420-422 (IGS) and Glu473. Trp550 serves as a coordination point for 5-methyltetrahydropteroyltri-L-glutamate. Asp588 provides a ligand contact to L-homocysteine. Asp588 is an L-methionine binding site. Glu594 serves as a coordination point for 5-methyltetrahydropteroyltri-L-glutamate. His630, Cys632, and Glu654 together coordinate Zn(2+). Catalysis depends on His683, which acts as the Proton donor. Cys715 contributes to the Zn(2+) binding site.

It belongs to the vitamin-B12 independent methionine synthase family. The cofactor is Zn(2+).

It catalyses the reaction 5-methyltetrahydropteroyltri-L-glutamate + L-homocysteine = tetrahydropteroyltri-L-glutamate + L-methionine. The protein operates within amino-acid biosynthesis; L-methionine biosynthesis via de novo pathway; L-methionine from L-homocysteine (MetE route): step 1/1. Its function is as follows. Catalyzes the transfer of a methyl group from 5-methyltetrahydrofolate to homocysteine resulting in methionine formation. This chain is 5-methyltetrahydropteroyltriglutamate--homocysteine methyltransferase, found in Staphylococcus epidermidis (strain ATCC 35984 / DSM 28319 / BCRC 17069 / CCUG 31568 / BM 3577 / RP62A).